Here is a 373-residue protein sequence, read N- to C-terminus: Glutamate 5-kinase (373 aa).

K12 provides a ligand contact to ATP. Substrate contacts are provided by S52, D139, and N154. Position 216–222 (216–222) interacts with ATP; sequence TGGMVTK. One can recognise a PUA domain in the interval 281–359; that stretch reads RGNICIDDGA…DEINTVLAGN (79 aa).

Belongs to the glutamate 5-kinase family.

It is found in the cytoplasm. The enzyme catalyses L-glutamate + ATP = L-glutamyl 5-phosphate + ADP. It participates in amino-acid biosynthesis; L-proline biosynthesis; L-glutamate 5-semialdehyde from L-glutamate: step 1/2. Catalyzes the transfer of a phosphate group to glutamate to form L-glutamate 5-phosphate. In Dehalococcoides mccartyi (strain ATCC BAA-2266 / KCTC 15142 / 195) (Dehalococcoides ethenogenes (strain 195)), this protein is Glutamate 5-kinase.